A 136-amino-acid chain; its full sequence is uncharacterized protein (136 aa).

Positions 74–97 (RADPGRKGRTQPLPTQGSARRFLH) are disordered.

This is an uncharacterized protein from Saccharomyces cerevisiae (strain ATCC 204508 / S288c) (Baker's yeast).